A 376-amino-acid chain; its full sequence is Geranylgeranyl transferase type-1 subunit beta (376 aa).

4 PFTB repeats span residues 128–179 (KRSL…YICG), 192–231 (TEKLLGYIMSQQCYNGAFGAHNEPHSGYTSCALSTLALLS), 259–301 (MKFE…HLLT), and 310–353 (TELV…ALIE). Geranylgeranyl diphosphate contacts are provided by residues 216–218 (HSG) and 280–283 (RENK). Zn(2+) contacts are provided by Asp-286 and Cys-288. 289 to 292 (YAFW) contacts geranylgeranyl diphosphate. His-341 lines the Zn(2+) pocket.

Belongs to the protein prenyltransferase subunit beta family. As to quaternary structure, heterodimer of an alpha (RAM2) and a beta (CDC43) subunit. Zn(2+) is required as a cofactor. Mg(2+) serves as cofactor.

It is found in the cytoplasm. It carries out the reaction geranylgeranyl diphosphate + L-cysteinyl-[protein] = S-geranylgeranyl-L-cysteinyl-[protein] + diphosphate. Its function is as follows. Catalyzes the transfer of a geranyl-geranyl moiety from geranyl-geranyl diphosphate to proteins having the C-terminal sequence Cys-Ile-Ile-Leu or Cys-Val-Leu-Leu. Acts, among other substrates, on Rho1 and Rho2 and CDC42 proteins. Participates in a RAS-like C-terminal modification of proteins involved in nuclear division and bud growth. It is involved in bud positioning and cell polarity. The beta subunit is responsible for isoprenoid and peptide-binding. This Saccharomyces cerevisiae (strain ATCC 204508 / S288c) (Baker's yeast) protein is Geranylgeranyl transferase type-1 subunit beta (CDC43).